The following is a 115-amino-acid chain: Evasin P1182 (115 aa).

The signal sequence occupies residues 1 to 26 (MALNWSFRVIFVSTMWCALLKFATLG). 4 disulfides stabilise this stretch: C38–C58, C54–C94, C70–C99, and C89–C108. N-linked (GlcNAc...) asparagine glycosylation is found at N45, N72, and N103.

The protein localises to the secreted. Functionally, salivary chemokine-binding protein which binds to host chemokines CCL2, CCL3, CCL4, CCL8 and CCL18. This is Evasin P1182 from Amblyomma maculatum (Gulf Coast tick).